The primary structure comprises 474 residues: PTS system sucrose-specific EIIBC component (474 aa).

Residues 4 to 87 (SQIAQQVIDK…SKLLGIGDMT (84 aa)) enclose the PTS EIIB type-1 domain. C26 acts as the Phosphocysteine intermediate; for EIIB activity in catalysis. One can recognise a PTS EIIC type-1 domain in the interval 107–474 (KGLADIFVPI…LGKRAQLKAE (368 aa)). The next 10 helical transmembrane spans lie at 109 to 129 (LADIFVPIIPAIVAGGLLMGI), 158 to 178 (FINTIANAPFVFLPVLLGFSA), 182 to 202 (FGGNPFLGAALGMLLVHPALS), 229 to 249 (VGYQGTVIPVLVASWVLATLE), 264 to 284 (ITPLFALFITGLLAFTVIGPI), 303 to 323 (LGFVGGAIFGTLYAPIVITGM), 345 to 365 (FIFPIAAMSNIAQGAACLGAA), 376 to 396 (IAVPSGISALLGITEPAMFGV), 403 to 423 (PFISAMIGAGISSAVIALFNV), and 444 to 464 (LAMYCVGMLISASIAFTLTVI).

Its subcellular location is the cell inner membrane. The catalysed reaction is N(pros)-phospho-L-histidyl-[protein](out) + sucrose = sucrose 6(G)-phosphate(in) + L-histidyl-[protein]. Functionally, the phosphoenolpyruvate-dependent sugar phosphotransferase system (sugar PTS), a major carbohydrate active transport system, catalyzes the phosphorylation of incoming sugar substrates concomitantly with their translocation across the cell membrane. This system is involved in sucrose transport. This is PTS system sucrose-specific EIIBC component (scrA) from Pasteurella multocida (strain Pm70).